Reading from the N-terminus, the 533-residue chain is MNDFWQHCSALLERELTPQQYVTWIKPLAPVAFDAAANTLSIAAPNRFKLDWVKSQFSGRISDLARDFWNAPIEVQFVLDPKAGQRSPAGATPLAPRAPLPSANPAPVAPGPASAPAVDAHAPAPAGMNAATAAAVAAAQAAQAAQANAAALNADEAADLDLPSLTAHEAAAGRRTWRPGAANANSEAADSMYERSKLNPVLTFDNFVTGKANQLARAAAIQVADNPGISYNPLFLYGGVGLGKTHLIHAIGNQLLLDKPGARIRYIHAEQYVSDVVKAYQRKAFDDFKRYYHSLDLLLIDDIQFFSGKSRTQEEFFYAFEALVANKAQVIITSDTYPKEISGIDDRLISRFDSGLTVAIEPPELEMRVAILMRKAQSEGVSLSEDVAFFVAKHLRSNVRELEGALRKILAYSKFHGREITIELTKEALKDLLTVQNRQISVENIQKTVADFYNIKVADMYSKKRPANIARPRQIAMYLAKELTQKSLPEIGELFGGRDHTTVLHAVRKIADERGKDAQLNHELHVLEQTLKG.

Residues 1–72 (MNDFWQHCSA…DLARDFWNAP (72 aa)) are domain I, interacts with DnaA modulators. The tract at residues 72–196 (PIEVQFVLDP…EAADSMYERS (125 aa)) is domain II. A disordered region spans residues 83-120 (AGQRSPAGATPLAPRAPLPSANPAPVAPGPASAPAVDA). A compositionally biased stretch (pro residues) spans 96-110 (PRAPLPSANPAPVAP). Residues 111–120 (GPASAPAVDA) show a composition bias toward low complexity. The domain III, AAA+ region stretch occupies residues 197 to 413 (KLNPVLTFDN…GALRKILAYS (217 aa)). 4 residues coordinate ATP: glycine 241, glycine 243, lysine 244, and threonine 245. Positions 414–533 (KFHGREITIE…LHVLEQTLKG (120 aa)) are domain IV, binds dsDNA.

This sequence belongs to the DnaA family. As to quaternary structure, oligomerizes as a right-handed, spiral filament on DNA at oriC.

It is found in the cytoplasm. In terms of biological role, plays an essential role in the initiation and regulation of chromosomal replication. ATP-DnaA binds to the origin of replication (oriC) to initiate formation of the DNA replication initiation complex once per cell cycle. Binds the DnaA box (a 9 base pair repeat at the origin) and separates the double-stranded (ds)DNA. Forms a right-handed helical filament on oriC DNA; dsDNA binds to the exterior of the filament while single-stranded (ss)DNA is stabiized in the filament's interior. The ATP-DnaA-oriC complex binds and stabilizes one strand of the AT-rich DNA unwinding element (DUE), permitting loading of DNA polymerase. After initiation quickly degrades to an ADP-DnaA complex that is not apt for DNA replication. Binds acidic phospholipids. This is Chromosomal replication initiator protein DnaA from Burkholderia pseudomallei (strain 1710b).